Here is a 104-residue protein sequence, read N- to C-terminus: Protein Rev (104 aa).

Phosphoserine; by host CK2 is present on Ser-5. The interval 18–26 (VIKILYQSN) is homomultimerization. Residues 25–34 (SNPYPNSKGT) show a composition bias toward polar residues. Disordered regions lie at residues 25 to 48 (SNPYPNSKGTRQARRNRRRRWRAR) and 63 to 104 (CLGG…ATTE). Positions 34–50 (TRQARRNRRRRWRARQR) match the Nuclear localization signal and RNA-binding (RRE) motif. Over residues 35–48 (RQARRNRRRRWRAR) the composition is skewed to basic residues. Positions 67–77 (PPEPVDLPLPP) are enriched in pro residues. The short motif at 73 to 84 (LPLPPLDRLTLD) is the Nuclear export signal and binding to XPO1 element. The segment covering 91 to 104 (TPGTESQQGTATTE) has biased composition (polar residues).

Belongs to the HIV-1 REV protein family. In terms of assembly, homomultimer; when bound to the RRE. Multimeric assembly is essential for activity and may involve XPO1. Binds to human KPNB1, XPO1, TNPO1, RANBP5 and IPO7. Interacts with the viral Integrase. Interacts with human KHDRBS1. Interacts with human NAP1; this interaction decreases Rev multimerization and stimulates its activity. Interacts with human DEAD-box helicases DDX3 and DDX24; these interactions may serve for viral RNA export to the cytoplasm and packaging, respectively. Interacts with human PSIP1; this interaction may inhibit HIV-1 DNA integration by promoting dissociation of the Integrase-LEDGF/p75 complex. Asymmetrically arginine dimethylated at one site by host PRMT6. Methylation impairs the RNA-binding activity and export of viral RNA from the nucleus to the cytoplasm. In terms of processing, phosphorylated by protein kinase CK2. Presence of, and maybe binding to the N-terminus of the regulatory beta subunit of CK2 is necessary for CK2-mediated Rev's phosphorylation.

The protein resides in the host nucleus. It localises to the host nucleolus. It is found in the host cytoplasm. Functionally, escorts unspliced or incompletely spliced viral pre-mRNAs (late transcripts) out of the nucleus of infected cells. These pre-mRNAs carry a recognition sequence called Rev responsive element (RRE) located in the env gene, that is not present in fully spliced viral mRNAs (early transcripts). This function is essential since most viral proteins are translated from unspliced or partially spliced pre-mRNAs which cannot exit the nucleus by the pathway used by fully processed cellular mRNAs. Rev itself is translated from a fully spliced mRNA that readily exits the nucleus. Rev's nuclear localization signal (NLS) binds directly to KPNB1/Importin beta-1 without previous binding to KPNA1/Importin alpha-1. KPNB1 binds to the GDP bound form of RAN (Ran-GDP) and targets Rev to the nucleus. In the nucleus, the conversion from Ran-GDP to Ran-GTP dissociates Rev from KPNB1 and allows Rev's binding to the RRE in viral pre-mRNAs. Rev multimerization on the RRE via cooperative assembly exposes its nuclear export signal (NES) to the surface. Rev can then form a complex with XPO1/CRM1 and Ran-GTP, leading to nuclear export of the complex. Conversion from Ran-GTP to Ran-GDP mediates dissociation of the Rev/RRE/XPO1/RAN complex, so that Rev can return to the nucleus for a subsequent round of export. Beside KPNB1, also seems to interact with TNPO1/Transportin-1, RANBP5/IPO5 and IPO7/RANBP7 for nuclear import. The nucleoporin-like HRB/RIP is an essential cofactor that probably indirectly interacts with Rev to release HIV RNAs from the perinuclear region to the cytoplasm. The chain is Protein Rev from Human immunodeficiency virus type 1 group N (isolate YBF30) (HIV-1).